The chain runs to 160 residues: Small ribosomal subunit protein uS19 (160 aa).

The protein belongs to the universal ribosomal protein uS19 family.

Functionally, protein S19 forms a complex with S13 that binds strongly to the 16S ribosomal RNA. The chain is Small ribosomal subunit protein uS19 from Pyrobaculum islandicum (strain DSM 4184 / JCM 9189 / GEO3).